Consider the following 532-residue polypeptide: Protein DETOXIFICATION 51 (532 aa).

12 helical membrane-spanning segments follow: residues 65–85, 98–118, 142–162, 176–196, 208–228, 238–258, 290–310, 316–336, 358–378, 395–415, 439–459, and 461–481; these read FPIAVTALVLYLRSAVSMFFL, LAIAFANITGYSVLSGLALGM, VVFLLVCCVPISVLWFNVGKI, AQTYLIFSLPDLLTNTLLHPI, PVTLASLSGAVFHLPANLFLV, VAVASSITNIFVVAFLVCYVW, VSVCLEWWWYEIMIVLCGLLV, VAAMGVLIQTTSFLYVFPSSL, LTATVAIVFAAVTGIIAAAFA, ILQLTAAALPILGLCEIGNCP, AFYLVGMPVAVGLGFWAGIGF, and GLWVGLLAAQISCAGLMMYVV.

Belongs to the multi antimicrobial extrusion (MATE) (TC 2.A.66.1) family. In terms of tissue distribution, expressed in the meristematic regions. Mainly detected in tissues where cells were actively dividing, such as leaf primordia and young leaves, the junction between lateral root and the primary root, root cap, hydathodes, the junction between secondary inflorescence and the main inflorescence, young stamen and young siliques. Highly expressed at the junction between the hypocotyl and the root, and at the marginal areas of cotyledons and true leaves, coinciding with the locations of the hydathode. Also highly expressed at the basal regions of the newly emerged lateral roots. In the floral organs, mostly expressed at the style of the pistil.

It is found in the endosome membrane. The protein localises to the late endosome membrane. Functionally, functions as a multidrug and toxin extrusion transporter that negatively regulates plant disease resistance. Plays an important role in maintaining normal plant architecture, possibly by regulating local auxin biosynthesis. May act as a negative regulator of hypocotyl cell elongation in the light. This is Protein DETOXIFICATION 51 from Arabidopsis thaliana (Mouse-ear cress).